The chain runs to 776 residues: DNA ligase (776 aa).

NAD(+)-binding positions include 31-35 (DAEYD) and 80-81 (SL). Lys-114 (N6-AMP-lysine intermediate) is an active-site residue. NAD(+)-binding residues include Arg-135, Glu-172, Lys-288, and Lys-312. Residues Cys-406, Cys-409, Cys-436, and Cys-442 each coordinate Zn(2+). The 84-residue stretch at 693–776 (AEGLPLAGQT…TFLAEQGIVV (84 aa)) folds into the BRCT domain.

This sequence belongs to the NAD-dependent DNA ligase family. LigA subfamily. Mg(2+) is required as a cofactor. The cofactor is Mn(2+).

The enzyme catalyses NAD(+) + (deoxyribonucleotide)n-3'-hydroxyl + 5'-phospho-(deoxyribonucleotide)m = (deoxyribonucleotide)n+m + AMP + beta-nicotinamide D-nucleotide.. Functionally, DNA ligase that catalyzes the formation of phosphodiester linkages between 5'-phosphoryl and 3'-hydroxyl groups in double-stranded DNA using NAD as a coenzyme and as the energy source for the reaction. It is essential for DNA replication and repair of damaged DNA. This chain is DNA ligase, found in Pseudomonas putida (strain GB-1).